The primary structure comprises 291 residues: Nucleotide-binding protein PPA0813 (291 aa).

17–24 is an ATP binding site; it reads GISGAGRR. 66-69 provides a ligand contact to GTP; that stretch reads DVRS.

This sequence belongs to the RapZ-like family.

In terms of biological role, displays ATPase and GTPase activities. This chain is Nucleotide-binding protein PPA0813, found in Cutibacterium acnes (strain DSM 16379 / KPA171202) (Propionibacterium acnes).